The primary structure comprises 615 residues: RNA polymerase sigma factor RpoD (615 aa).

Residues 166–216 (GYIDPDDGITPPAAEVPPPVDTKTAKADDDSEDEEAEATEDEEEAESGPDP) are disordered. Residues 194-212 (DDSEDEEAEATEDEEEAES) are compositionally biased toward acidic residues. The segment at 381-451 (MVEANLRLVI…TRSIADQART (71 aa)) is sigma-70 factor domain-2. Positions 405-408 (DLIQ) match the Interaction with polymerase core subunit RpoC motif. The tract at residues 460–536 (ETINKLNRIS…DSTMQSPIDV (77 aa)) is sigma-70 factor domain-3. The tract at residues 549-602 (VLSGLTAREAKVLRMRFGIDMNTDHTLEEVGKQFDVTRERIRQIEAKALRKLRH) is sigma-70 factor domain-4. The segment at residues 575-594 (LEEVGKQFDVTRERIRQIEA) is a DNA-binding region (H-T-H motif).

The protein belongs to the sigma-70 factor family. RpoD/SigA subfamily. In terms of assembly, interacts transiently with the RNA polymerase catalytic core.

The protein resides in the cytoplasm. Its function is as follows. Sigma factors are initiation factors that promote the attachment of RNA polymerase to specific initiation sites and are then released. This sigma factor is the primary sigma factor during exponential growth. The polypeptide is RNA polymerase sigma factor RpoD (Pseudomonas protegens (strain DSM 19095 / LMG 27888 / CFBP 6595 / CHA0)).